Here is a 332-residue protein sequence, read N- to C-terminus: T-cell surface glycoprotein CD1b2 (332 aa).

Residues 1–17 (MLLLVLALLAVLFPAGD) form the signal peptide. Over 18 to 301 (TQDAFPEPIS…ILYWGNSSIG (284 aa)) the chain is Extracellular. N-linked (GlcNAc...) asparagine glycosylation is found at Asn38, Asn75, and Asn146. Intrachain disulfides connect Cys120–Cys184, Cys149–Cys163, and Cys224–Cys279. The region spanning 185 to 295 (PRYLMSVLEA…LGGQDIILYW (111 aa)) is the Ig-like domain. N-linked (GlcNAc...) asparagine glycosylation occurs at Asn297. The helical transmembrane segment at 302 to 322 (WIILAVFVSCLIVLLFYVLWF) threads the bilayer. At 323-332 (YKHWSYQDIL) the chain is on the cytoplasmic side. The Internalization signal signature appears at 328-331 (YQDI).

As to quaternary structure, heterodimer with B2M (beta-2-microglobulin). Interacts with saposin C.

The protein resides in the cell membrane. Its subcellular location is the endosome membrane. It is found in the lysosome membrane. In terms of biological role, antigen-presenting protein that binds self and non-self lipid and glycolipid antigens and presents them to T-cell receptors on natural killer T-cells. In Cavia porcellus (Guinea pig), this protein is T-cell surface glycoprotein CD1b2 (CD1B2).